The chain runs to 336 residues: Eukaryotic translation initiation factor 3 subunit H (336 aa).

An MPN domain is found at 21 to 154; sequence VQCDGLAAMK…LKAYRLTPQA (134 aa).

It belongs to the eIF-3 subunit H family. As to quaternary structure, component of the eukaryotic translation initiation factor 3 (eIF-3) complex.

The protein localises to the cytoplasm. In terms of biological role, component of the eukaryotic translation initiation factor 3 (eIF-3) complex, which is involved in protein synthesis of a specialized repertoire of mRNAs and, together with other initiation factors, stimulates binding of mRNA and methionyl-tRNAi to the 40S ribosome. The eIF-3 complex specifically targets and initiates translation of a subset of mRNAs involved in cell proliferation. The protein is Eukaryotic translation initiation factor 3 subunit H of Culex quinquefasciatus (Southern house mosquito).